A 467-amino-acid chain; its full sequence is Membrane-bound lytic murein transglycosylase F (467 aa).

The signal sequence occupies residues 1-33; the sequence is MTELFRHSKHLLASLALLSVLGLMLAMHPSPSA. The interval 34–266 is non-LT domain; sequence IERIMARGEL…KLEDRFYGHV (233 aa). An LT domain region spans residues 268–467; that stretch reads QFNLYAARSF…RRDDTLIALN (200 aa). The active site involves E313.

It in the N-terminal section; belongs to the bacterial solute-binding protein 3 family. This sequence in the C-terminal section; belongs to the transglycosylase Slt family.

Its subcellular location is the cell outer membrane. It carries out the reaction Exolytic cleavage of the (1-&gt;4)-beta-glycosidic linkage between N-acetylmuramic acid (MurNAc) and N-acetylglucosamine (GlcNAc) residues in peptidoglycan, from either the reducing or the non-reducing ends of the peptidoglycan chains, with concomitant formation of a 1,6-anhydrobond in the MurNAc residue.. In terms of biological role, murein-degrading enzyme that degrades murein glycan strands and insoluble, high-molecular weight murein sacculi, with the concomitant formation of a 1,6-anhydromuramoyl product. Lytic transglycosylases (LTs) play an integral role in the metabolism of the peptidoglycan (PG) sacculus. Their lytic action creates space within the PG sacculus to allow for its expansion as well as for the insertion of various structures such as secretion systems and flagella. This Alcanivorax borkumensis (strain ATCC 700651 / DSM 11573 / NCIMB 13689 / SK2) protein is Membrane-bound lytic murein transglycosylase F.